Reading from the N-terminus, the 452-residue chain is Pup--protein ligase (452 aa).

Glu-9 contributes to the Mg(2+) binding site. Residue Arg-53 coordinates ATP. Residue Tyr-55 participates in Mg(2+) binding. Asp-57 serves as the catalytic Proton acceptor. A Mg(2+)-binding site is contributed by Glu-63. Thr-66 and Trp-419 together coordinate ATP.

The protein belongs to the Pup ligase/Pup deamidase family. Pup-conjugating enzyme subfamily.

The enzyme catalyses ATP + [prokaryotic ubiquitin-like protein]-L-glutamate + [protein]-L-lysine = ADP + phosphate + N(6)-([prokaryotic ubiquitin-like protein]-gamma-L-glutamyl)-[protein]-L-lysine.. Its pathway is protein degradation; proteasomal Pup-dependent pathway. The protein operates within protein modification; protein pupylation. Its function is as follows. Catalyzes the covalent attachment of the prokaryotic ubiquitin-like protein modifier Pup to the proteasomal substrate proteins, thereby targeting them for proteasomal degradation. This tagging system is termed pupylation. The ligation reaction involves the side-chain carboxylate of the C-terminal glutamate of Pup and the side-chain amino group of a substrate lysine. This Mycolicibacterium gilvum (strain PYR-GCK) (Mycobacterium gilvum (strain PYR-GCK)) protein is Pup--protein ligase.